Consider the following 528-residue polypeptide: Phosphoenolpyruvate carboxykinase (ATP) (528 aa).

Substrate is bound by residues Arg56, Tyr192, and Lys198. Residues Lys198, His217, and 233–241 (GLSGTGKTT) contribute to the ATP site. Mn(2+)-binding residues include Lys198 and His217. Asp254 serves as a coordination point for Mn(2+). Positions 282, 319, and 444 each coordinate ATP. Arg319 lines the substrate pocket.

Belongs to the phosphoenolpyruvate carboxykinase (ATP) family. Mn(2+) serves as cofactor.

The protein localises to the cytoplasm. It carries out the reaction oxaloacetate + ATP = phosphoenolpyruvate + ADP + CO2. It participates in carbohydrate biosynthesis; gluconeogenesis. Functionally, involved in the gluconeogenesis. Catalyzes the conversion of oxaloacetate (OAA) to phosphoenolpyruvate (PEP) through direct phosphoryl transfer between the nucleoside triphosphate and OAA. This is Phosphoenolpyruvate carboxykinase (ATP) from Bacillus pumilus (strain SAFR-032).